Consider the following 209-residue polypeptide: Guanylate kinase (209 aa).

The region spanning 9-188 (GIMLVISSPS…SVHQIKCIFT (180 aa)) is the Guanylate kinase-like domain. 16–23 (SPSGGGKT) contributes to the ATP binding site.

The protein belongs to the guanylate kinase family.

The protein localises to the cytoplasm. It carries out the reaction GMP + ATP = GDP + ADP. Functionally, essential for recycling GMP and indirectly, cGMP. This is Guanylate kinase from Ehrlichia canis (strain Jake).